The sequence spans 209 residues: Small ribosomal subunit protein uS4 (209 aa).

An S4 RNA-binding domain is found at 98 to 164; sequence SRLDNVVYRG…TPFIVARETA (67 aa).

This sequence belongs to the universal ribosomal protein uS4 family. As to quaternary structure, part of the 30S ribosomal subunit. Contacts protein S5. The interaction surface between S4 and S5 is involved in control of translational fidelity.

Functionally, one of the primary rRNA binding proteins, it binds directly to 16S rRNA where it nucleates assembly of the body of the 30S subunit. With S5 and S12 plays an important role in translational accuracy. The protein is Small ribosomal subunit protein uS4 of Frankia casuarinae (strain DSM 45818 / CECT 9043 / HFP020203 / CcI3).